A 286-amino-acid polypeptide reads, in one-letter code: Bifunctional protein FolD (286 aa).

Residues 166–168 (GAS) and I232 each bind NADP(+).

It belongs to the tetrahydrofolate dehydrogenase/cyclohydrolase family. As to quaternary structure, homodimer.

The enzyme catalyses (6R)-5,10-methylene-5,6,7,8-tetrahydrofolate + NADP(+) = (6R)-5,10-methenyltetrahydrofolate + NADPH. The catalysed reaction is (6R)-5,10-methenyltetrahydrofolate + H2O = (6R)-10-formyltetrahydrofolate + H(+). It functions in the pathway one-carbon metabolism; tetrahydrofolate interconversion. Functionally, catalyzes the oxidation of 5,10-methylenetetrahydrofolate to 5,10-methenyltetrahydrofolate and then the hydrolysis of 5,10-methenyltetrahydrofolate to 10-formyltetrahydrofolate. This Shewanella woodyi (strain ATCC 51908 / MS32) protein is Bifunctional protein FolD.